Here is a 170-residue protein sequence, read N- to C-terminus: Cathelicidin antimicrobial peptide (170 aa).

The signal sequence occupies residues 1 to 30; it reads MKTQRDGPSLGRWSLLLLLLGLTMPLAVIG. The propeptide at 31 to 131 is cathelin-like domain (CLD); it reads RVLSYQEAVL…DISCDKDKRK (101 aa). The segment at 31–131 is cathelin-like domain (CLD); sequence RVLSYQEAVL…DISCDKDKRK (101 aa). 2 cysteine pairs are disulfide-bonded: C86-C97 and C108-C125. Positions 150–162 are active core; the sequence is LKKIGQKIKDFFG.

The protein belongs to the cathelicidin family. In terms of assembly, monomer, homodimer or homotrimer (in vitro). Oligomerizes as tetra- or hexamer in solution (in vitro). Proteolytically cleaved by proteinase PRTN3 into antibacterial peptide LL-37. Proteolytically cleaved by cathepsin CTSG and neutrophil elastase ELANE. In terms of processing, resistant to proteolytic degradation in solution, and when bound to both zwitterionic (mimicking mammalian membranes) and negatively charged membranes (mimicking bacterial membranes). Post-translationally, after secretion onto the skin surface, the CAMP gene product is processed by a serine protease-dependent mechanism into multiple novel antimicrobial peptides distinct from and shorter than cathelicidin LL-37. These peptides show enhanced antimicrobial action, acquiring the ability to kill skin pathogens such as S.aureus, E.coli and C.albicans. These peptides have lost the ability to stimulate CXCL8/IL8 release from keratinocytes. The peptides act synergistically, killing bacteria at lower concentrations when present together, and maintain activity at increased salt condition.

The protein resides in the secreted. It is found in the vesicle. Functionally, antimicrobial protein that is an integral component of the innate immune system. Binds to bacterial lipopolysaccharides (LPS). Acts via neutrophil N-formyl peptide receptors to enhance the release of CXCL2. Postsecretory processing generates multiple cathelicidin antimicrobial peptides with various lengths which act as a topical antimicrobial defense in sweat on skin. The unprocessed precursor form, cathelicidin antimicrobial peptide, inhibits the growth of Gram-negative E.coli and E.aerogenes with efficiencies comparable to that of the mature peptide LL-37 (in vitro). Its function is as follows. Antimicrobial peptide that is an integral component of the innate immune system. Binds to bacterial lipopolysaccharides (LPS). Causes membrane permeabilization by forming transmembrane pores (in vitro). Causes lysis of E.coli. Exhibits antimicrobial activity against Gram-negative bacteria such as P.aeruginosa, S.typhimurium, E.aerogenes, E.coli and P.syringae, Gram-positive bacteria such as L.monocytogenes, S.epidermidis, S.pyogenes and S.aureus, as well as vancomycin-resistant enterococci (in vitro). Exhibits antimicrobial activity against methicillin-resistant S.aureus, P.mirabilis, and C.albicans in low-salt media, but not in media containing 100 mM NaCl (in vitro). Forms chiral supramolecular assemblies with quinolone signal (PQS) molecules of P.aeruginosa, which may lead to interference of bacterial quorum signaling and perturbance of bacterial biofilm formation. May form supramolecular fiber-like assemblies on bacterial membranes. Induces cytokine and chemokine producation as well as TNF/TNFA and CSF2/GMCSF production in normal human keratinocytes. Exhibits hemolytic activity against red blood cells. Exhibits antimicrobial activity against E.coli and B.megaterium (in vitro). This is Cathelicidin antimicrobial peptide from Saguinus oedipus (Cotton-top tamarin).